The primary structure comprises 491 residues: Peptidoglycan D,D-transpeptidase PbpA (491 aa).

Residues 1-8 (MNTSLRRV) lie on the Cytoplasmic side of the membrane. The helical; Signal-anchor for type II membrane protein transmembrane segment at 9 to 29 (AVAIMVLIVLLLANATVTQVF) threads the bilayer. At 30–491 (AADGLRADPR…TIAAALREGS (462 aa)) the chain is on the periplasmic side. The transpeptidase stretch occupies residues 160-484 (GSVVALEPST…AAPIGRATIA (325 aa)). The Acyl-ester intermediate role is filled by S222.

Belongs to the transpeptidase family.

Its subcellular location is the cell inner membrane. It catalyses the reaction Preferential cleavage: (Ac)2-L-Lys-D-Ala-|-D-Ala. Also transpeptidation of peptidyl-alanyl moieties that are N-acyl substituents of D-alanine.. The protein operates within cell wall biogenesis; peptidoglycan biosynthesis. In terms of biological role, transpeptidase that catalyzes cross-linking of the peptidoglycan cell wall. Required for the regulation of cell length. In Mycolicibacterium smegmatis (strain ATCC 700084 / mc(2)155) (Mycobacterium smegmatis), this protein is Peptidoglycan D,D-transpeptidase PbpA (pbpA).